Here is a 492-residue protein sequence, read N- to C-terminus: Ketol-acid reductoisomerase (NADP(+)) (492 aa).

One can recognise a KARI N-terminal Rossmann domain in the interval 17–208 (LGQCRLMKKN…GSNKAGVLES (192 aa)). NADP(+)-binding positions include 45 to 48 (CGSQ), arginine 68, serine 76, and serine 78. Histidine 132 is a catalytic residue. Glycine 158 serves as a coordination point for NADP(+). 2 consecutive KARI C-terminal knotted domains span residues 209-344 (SFVA…KAPV) and 345-487 (YCET…MKDM). Residues aspartate 217, glutamate 221, glutamate 389, and glutamate 393 each coordinate Mg(2+). Serine 414 contacts substrate.

This sequence belongs to the ketol-acid reductoisomerase family. The cofactor is Mg(2+).

The enzyme catalyses (2R)-2,3-dihydroxy-3-methylbutanoate + NADP(+) = (2S)-2-acetolactate + NADPH + H(+). The catalysed reaction is (2R,3R)-2,3-dihydroxy-3-methylpentanoate + NADP(+) = (S)-2-ethyl-2-hydroxy-3-oxobutanoate + NADPH + H(+). It functions in the pathway amino-acid biosynthesis; L-isoleucine biosynthesis; L-isoleucine from 2-oxobutanoate: step 2/4. It participates in amino-acid biosynthesis; L-valine biosynthesis; L-valine from pyruvate: step 2/4. Involved in the biosynthesis of branched-chain amino acids (BCAA). Catalyzes an alkyl-migration followed by a ketol-acid reduction of (S)-2-acetolactate (S2AL) to yield (R)-2,3-dihydroxy-isovalerate. In the isomerase reaction, S2AL is rearranged via a Mg-dependent methyl migration to produce 3-hydroxy-3-methyl-2-ketobutyrate (HMKB). In the reductase reaction, this 2-ketoacid undergoes a metal-dependent reduction by NADPH to yield (R)-2,3-dihydroxy-isovalerate. This Blochmanniella floridana protein is Ketol-acid reductoisomerase (NADP(+)).